A 115-amino-acid chain; its full sequence is MRYVASYLLAALGGNSSPSAKDIKKILDSVGIEADDDRLNKVISELNGKNIEDVIAQGIGKLASVPAGGAVAVSAAPGSAAPAAGSAPAAAEEKKDEKKEESEESDDDMGFGLFD.

Methionine 1 bears the N-acetylmethionine mark. A phosphoserine mark is found at serine 17 and serine 19. Lysine 21 carries the post-translational modification N6-acetyllysine; alternate. An N6-succinyllysine; alternate modification is found at lysine 21. The segment covering 78-90 has biased composition (low complexity); it reads GSAAPAAGSAPAA. The segment at 78–115 is disordered; that stretch reads GSAAPAAGSAPAAAEEKKDEKKEESEESDDDMGFGLFD. A phosphoserine mark is found at serine 79 and serine 86. The segment covering 91–101 has biased composition (basic and acidic residues); the sequence is AEEKKDEKKEE. A phosphoserine mark is found at serine 102 and serine 105.

It belongs to the eukaryotic ribosomal protein P1/P2 family. As to quaternary structure, heterodimer with P1 at the lateral ribosomal stalk of the large ribosomal subunit.

Its function is as follows. Plays an important role in the elongation step of protein synthesis. This is Large ribosomal subunit protein P2 (RPLP2) from Homo sapiens (Human).